Consider the following 276-residue polypeptide: NAD-capped RNA hydrolase NudC (276 aa).

Arg-82 is a substrate binding site. Zn(2+) is bound by residues Cys-112 and Cys-115. Glu-125 contributes to the substrate binding site. Residues Cys-130 and Cys-133 each contribute to the Zn(2+) site. Substrate is bound at residue Tyr-138. The 124-residue stretch at 139 to 262 (PRISPSMIVL…SIARYLIDLY (124 aa)) folds into the Nudix hydrolase domain. A divalent metal cation is bound by residues Ala-172, Glu-188, and Glu-192. The short motif at 173–194 (GFAEPGESAEDCLVREVREEVA) is the Nudix box element. 206–213 (QCWPFPHS) provides a ligand contact to substrate. Residue Glu-233 participates in a divalent metal cation binding. Ala-255 is a substrate binding site.

This sequence belongs to the Nudix hydrolase family. NudC subfamily. Homodimer. Requires Mg(2+) as cofactor. The cofactor is Mn(2+). Zn(2+) is required as a cofactor.

The enzyme catalyses a 5'-end NAD(+)-phospho-ribonucleoside in mRNA + H2O = a 5'-end phospho-adenosine-phospho-ribonucleoside in mRNA + beta-nicotinamide D-ribonucleotide + 2 H(+). It catalyses the reaction NAD(+) + H2O = beta-nicotinamide D-ribonucleotide + AMP + 2 H(+). The catalysed reaction is NADH + H2O = reduced beta-nicotinamide D-ribonucleotide + AMP + 2 H(+). Its function is as follows. mRNA decapping enzyme that specifically removes the nicotinamide adenine dinucleotide (NAD) cap from a subset of mRNAs by hydrolyzing the diphosphate linkage to produce nicotinamide mononucleotide (NMN) and 5' monophosphate mRNA. The NAD-cap is present at the 5'-end of some mRNAs and stabilizes RNA against 5'-processing. Has preference for mRNAs with a 5'-end purine. Catalyzes the hydrolysis of a broad range of dinucleotide pyrophosphates. The polypeptide is NAD-capped RNA hydrolase NudC (Pseudomonas putida (strain GB-1)).